Reading from the N-terminus, the 85-residue chain is UPF0335 protein Atu3758 (85 aa).

This sequence belongs to the UPF0335 family.

In Agrobacterium fabrum (strain C58 / ATCC 33970) (Agrobacterium tumefaciens (strain C58)), this protein is UPF0335 protein Atu3758.